Here is a 436-residue protein sequence, read N- to C-terminus: Glutamyl-tRNA reductase (436 aa).

Residues 49 to 52 (TCNR), S109, 114 to 116 (EGQ), and Q120 contribute to the substrate site. The active-site Nucleophile is the C50. An NADP(+)-binding site is contributed by 198–203 (GAGRMS).

It belongs to the glutamyl-tRNA reductase family. In terms of assembly, homodimer.

The catalysed reaction is (S)-4-amino-5-oxopentanoate + tRNA(Glu) + NADP(+) = L-glutamyl-tRNA(Glu) + NADPH + H(+). It functions in the pathway porphyrin-containing compound metabolism; protoporphyrin-IX biosynthesis; 5-aminolevulinate from L-glutamyl-tRNA(Glu): step 1/2. The protein operates within porphyrin-containing compound metabolism; chlorophyll biosynthesis. Its function is as follows. Catalyzes the NADPH-dependent reduction of glutamyl-tRNA(Glu) to glutamate 1-semialdehyde (GSA). This Prochlorococcus marinus (strain MIT 9301) protein is Glutamyl-tRNA reductase.